We begin with the raw amino-acid sequence, 49 residues long: uncharacterized protein (49 aa).

Belongs to the ELIP/psbS family.

The protein localises to the plastid. Its subcellular location is the cyanelle. Its function is as follows. Possible role in chlorophyll and/or carotenoid binding. This is an uncharacterized protein from Cyanophora paradoxa.